We begin with the raw amino-acid sequence, 257 residues long: Pyridoxine 5'-phosphate synthase (257 aa).

Position 6 (Asn6) interacts with 3-amino-2-oxopropyl phosphate. Residue 8–9 coordinates 1-deoxy-D-xylulose 5-phosphate; the sequence is DH. Arg17 lines the 3-amino-2-oxopropyl phosphate pocket. His41 (proton acceptor) is an active-site residue. 1-deoxy-D-xylulose 5-phosphate contacts are provided by Arg43 and His48. Glu68 acts as the Proton acceptor in catalysis. Thr98 is a binding site for 1-deoxy-D-xylulose 5-phosphate. His210 (proton donor) is an active-site residue. 3-amino-2-oxopropyl phosphate contacts are provided by residues Gly211 and 232–233; that span reads GQ.

This sequence belongs to the PNP synthase family. Homooctamer; tetramer of dimers.

The protein resides in the cytoplasm. The catalysed reaction is 3-amino-2-oxopropyl phosphate + 1-deoxy-D-xylulose 5-phosphate = pyridoxine 5'-phosphate + phosphate + 2 H2O + H(+). The protein operates within cofactor biosynthesis; pyridoxine 5'-phosphate biosynthesis; pyridoxine 5'-phosphate from D-erythrose 4-phosphate: step 5/5. In terms of biological role, catalyzes the complicated ring closure reaction between the two acyclic compounds 1-deoxy-D-xylulose-5-phosphate (DXP) and 3-amino-2-oxopropyl phosphate (1-amino-acetone-3-phosphate or AAP) to form pyridoxine 5'-phosphate (PNP) and inorganic phosphate. In Campylobacter jejuni (strain RM1221), this protein is Pyridoxine 5'-phosphate synthase.